The following is a 410-amino-acid chain: MEPPPAPGPERLFDSHRLPSDGFLLLALLLYAPVGLCLLVLRLFLGLHVFLVSCALPDSVLRRFVVRTMCAVLGLVARQEDSGLRDHRVRVLISNHVTPFDHNIVNLLTTCSTPLLNSPPSFVCWSRGFMEMDRRVELVESLKKFCASTRLPPTPLLLFPEEEATNGREGLLRFSSWPFSIQDVVQPLTLQVQRPLVSVTVSDASWVSELLWSLFVPFTVYQVRWLHPIRRQLGEESEEFALRVQQLVAKELGQIGTRLTPADKAEHMKRQRHPRLRPQSVQSSFPSPPSPSSDVQLTTLAHRVKEVLPHVPLNVIQRDLARTGCVDLTITNLLEGAVAFMPEDVTEGSQSPPAPSAPKFPSSGLATPQPTALTFAKSSWARQESLQERKQALYEYARRRFRERQAQEAE.

An N-acetylmethionine modification is found at Met-1. The Cytoplasmic segment spans residues 1–20 (MEPPPAPGPERLFDSHRLPS). Residues 21–41 (DGFLLLALLLYAPVGLCLLVL) lie within the membrane without spanning it. The Cytoplasmic segment spans residues 42 to 410 (RLFLGLHVFL…FRERQAQEAE (369 aa)). The tract at residues 258 to 295 (RLTPADKAEHMKRQRHPRLRPQSVQSSFPSPPSPSSDV) is disordered. A Phosphoserine modification is found at Ser-292. In terms of domain architecture, CUE spans 296 to 338 (QLTTLAHRVKEVLPHVPLNVIQRDLARTGCVDLTITNLLEGAV). A disordered region spans residues 344–369 (DVTEGSQSPPAPSAPKFPSSGLATPQ). Residue Ser-363 is modified to Phosphoserine. The residue at position 367 (Thr-367) is a Phosphothreonine.

The protein belongs to the AUP1 family. In terms of assembly, identified in a complex that contains SEL1L, OS9, FAF2/UBXD8, UBE2J1/UBC6E and AUP1. Interacts with the cytoplasmic tail of ITGA2B, ITGA1, ITGA2, ITGA5, ITGAV and ITGAM. Interacts (via C-terminus) with UBE2G2; the interaction recruits UBE2G2 to lipid droplets. Interacts with ubiquitin ligases AMFR/gp78 and RNF139/TRC8; this promotes interaction of UBE2G2 with AMFR and RNF139. Interacts with apolipoprotein APOB. In terms of processing, monoubiquitinated and diubiquitinated. As to expression, ubiquitous.

The protein localises to the endoplasmic reticulum membrane. Its subcellular location is the lipid droplet. Plays a role in the translocation of terminally misfolded proteins from the endoplasmic reticulum lumen to the cytoplasm and their degradation by the proteasome. Plays a role in lipid droplet formation. Induces lipid droplet clustering. Recruits ubiquitin-conjugating enzyme UBE2G2 to lipid droplets which facilitates its interaction with ubiquitin ligases AMFR/gp78 and RNF139/TRC8, leading to sterol-induced ubiquitination of HMGCR and its subsequent proteasomal degradation. Also required for the degradation of INSIG1, SREBF1 and SREBF2. Plays a role in regulating assembly and secretion of very low density lipoprotein particles and stability of apolipoprotein APOB. This is Lipid droplet-regulating VLDL assembly factor AUP1 from Mus musculus (Mouse).